The following is a 595-amino-acid chain: Pectinesterase 5 (595 aa).

An N-terminal signal peptide occupies residues 1–24 (MIGKVVVSVASILLIVGVAIGVVA). 2 N-linked (GlcNAc...) asparagine glycosylation sites follow: asparagine 86 and asparagine 206. Positions 215–239 (SDKGAAPVNKGTPPVADDSPVADPD) are disordered. The segment covering 227-239 (PPVADDSPVADPD) has biased composition (low complexity). The RRLL cleavage motif motif lies at 243-246 (RRLL). The RKLM cleavage motif signature appears at 263–266 (RKLM). Asparagine 349 carries N-linked (GlcNAc...) asparagine glycosylation. Threonine 360 and glutamine 390 together coordinate substrate. Aspartate 413 serves as the catalytic Proton donor. Aspartate 434 serves as the catalytic Nucleophile. 2 residues coordinate substrate: arginine 503 and tryptophan 505.

In the N-terminal section; belongs to the PMEI family. The protein in the C-terminal section; belongs to the pectinesterase family. As to quaternary structure, interacts with SBT6.1. In terms of tissue distribution, expressed in pollen grains and pollen tubes.

Its subcellular location is the cell membrane. It is found in the secreted. The protein resides in the cell wall. It localises to the golgi apparatus membrane. It carries out the reaction [(1-&gt;4)-alpha-D-galacturonosyl methyl ester](n) + n H2O = [(1-&gt;4)-alpha-D-galacturonosyl](n) + n methanol + n H(+). It participates in glycan metabolism; pectin degradation; 2-dehydro-3-deoxy-D-gluconate from pectin: step 1/5. Acts in the modification of cell walls via demethylesterification of cell wall pectin. Plays an important role in growth of pollen tubes in female floral tissues, possibly via enhancing the interaction between the pollen tube and female floral tissues by modification of the cell walls. May be regulated by MYB80 during anther development and play a role in tapetum and pollen development. The protein is Pectinesterase 5 (PME5) of Arabidopsis thaliana (Mouse-ear cress).